The primary structure comprises 1451 residues: Glutamate receptor ionotropic, NMDA 2A (1451 aa).

Positions 1–20 (MGMFVLLLYTFLYAGDLGHG) are cleaved as a signal peptide. The Extracellular portion of the chain corresponds to 21–547 (AEKSFPVLNI…PSAFLEPFSA (527 aa)). Residue N67 is glycosylated (N-linked (GlcNAc...) asparagine). An intrachain disulfide couples C79 to C312. Residues H120, D258, and D274 each contribute to the Zn(2+) site. N332, N372, N435, and N436 each carry an N-linked (GlcNAc...) asparagine glycan. Disulfide bonds link C421–C447 and C428–C448. S503, T505, and R510 together coordinate L-glutamate. N-linked (GlcNAc...) asparagine glycosylation occurs at N533. Residues 548–568 (SVWVMMFVMLLLVSAMAVFIF) form a helical membrane-spanning segment. Topologically, residues 569-592 (EYFSPVGYNRNLAQGKDPHGPSFT) are cytoplasmic. Residues 591–612 (FTIGKAVWLLWGLVFNNSVPVQ) are pore-forming. Positions 593–612 (IGKAVWLLWGLVFNNSVPVQ) form an intramembrane region, discontinuously helical. Residues 613–617 (NPKGT) are Cytoplasmic-facing. Residues 618–637 (TSKIIVSIWAFFAVIFLASY) traverse the membrane as a helical segment. The Extracellular portion of the chain corresponds to 638–808 (TANLAAFMIQ…VMSSQLDIDN (171 aa)). N-linked (GlcNAc...) asparagine glycosylation occurs at N679. L-glutamate is bound by residues S681, T682, and D723. C737 and C792 are disulfide-bonded. The helical transmembrane segment at 809–829 (MAGVFYMLAAAMALSLITFVW) threads the bilayer. The Cytoplasmic segment spans residues 830 to 1451 (EHLFYWKLRF…KKMPSLESDV (622 aa)). Over residues 1011-1022 (TLRQTQGSVNEN) the composition is skewed to polar residues. Disordered stretches follow at residues 1011–1080 (TLRQ…VSAK) and 1100–1165 (NRDK…GRLP). Basic and acidic residues-rich tracts occupy residues 1055 to 1073 (CHID…DNLK), 1100 to 1113 (NRDK…DKEP), and 1138 to 1149 (YQDHNDNYRKTE).

Belongs to the glutamate-gated ion channel (TC 1.A.10.1) family. As to quaternary structure, heterotetramer. Forms heterotetrameric channels composed of two GluN1/zeta subunits (GRIN1), and two identical GluN2/epsilon subunits (GRIN2A, GRIN2B, GRIN2C or GRIN2D) or GluN3 subunits (GRIN3A or GRIN3B) (in vitro). In vivo, the subunit composition may depend on the expression levels of the different subunits.

It localises to the cell membrane. Its subcellular location is the postsynaptic cell membrane. The enzyme catalyses Ca(2+)(in) = Ca(2+)(out). It catalyses the reaction Na(+)(in) = Na(+)(out). The catalysed reaction is K(+)(in) = K(+)(out). In terms of biological role, component of N-methyl-D-aspartate (NMDA) receptors (NMDARs) that function as heterotetrameric, ligand-gated cation channels with high calcium permeability and voltage-dependent block by Mg(2+). MDARs participate in synaptic plasticity. Channel activation requires binding of the neurotransmitter L-glutamate to the GluN2 subunit, glycine binding to the GluN1 subunit, plus membrane depolarization to eliminate channel inhibition by Mg(2+). NMDARs mediate simultaneously the potasium efflux and the influx of calcium and sodium. Each GluN2 subunit confers differential attributes to channel properties, including activation, deactivation and desensitization kinetics, pH sensitivity, Ca2(+) permeability, and binding to allosteric modulators. Plays a role in dendritic branching in brain neurons and in synaptic plasticity. This is Glutamate receptor ionotropic, NMDA 2A from Xenopus laevis (African clawed frog).